We begin with the raw amino-acid sequence, 238 residues long: Aspartate/glutamate leucyltransferase (238 aa).

This sequence belongs to the R-transferase family. Bpt subfamily.

It is found in the cytoplasm. It catalyses the reaction N-terminal L-glutamyl-[protein] + L-leucyl-tRNA(Leu) = N-terminal L-leucyl-L-glutamyl-[protein] + tRNA(Leu) + H(+). The catalysed reaction is N-terminal L-aspartyl-[protein] + L-leucyl-tRNA(Leu) = N-terminal L-leucyl-L-aspartyl-[protein] + tRNA(Leu) + H(+). In terms of biological role, functions in the N-end rule pathway of protein degradation where it conjugates Leu from its aminoacyl-tRNA to the N-termini of proteins containing an N-terminal aspartate or glutamate. This Shewanella sp. (strain ANA-3) protein is Aspartate/glutamate leucyltransferase.